The chain runs to 307 residues: Serine/threonine-protein phosphatase 4 catalytic subunit (307 aa).

Alanine 2 bears the N-acetylalanine mark. Residues aspartate 54, histidine 56, aspartate 82, and asparagine 114 each contribute to the Mn(2+) site. Histidine 115 acts as the Proton donor in catalysis. Residues histidine 164 and histidine 238 each contribute to the Mn(2+) site. Position 307 is a leucine methyl ester (leucine 307).

It belongs to the PPP phosphatase family. PP-4 (PP-X) subfamily. In terms of assembly, serine/threonine-protein phosphatase 4 (PP4) occurs in different assemblies of the catalytic and one or more regulatory subunits. Component of the PP4 complexes PPP4C-PPP4R1, PPP4C-PPP4R2, PPP4C-PPP4R2-PPP4R3A, PPP4C-PPP4R2-PPP4R3B and PPP4C-PPP4R4. The PPP4C-PPP4R2 complex appears to be a tetramer composed of 2 molecules of PPP4C and 2 molecules of PPP4R2. Interacts with REL, NFKB1/p50 and RELA. Interacts with SMN1 and GEMIN4. Interacts with IRS4 (phosphorylated). Interacts with SMEK1/PPP4R3A; the interaction requires PP4R2. Interacts with HDAC3. Mn(2+) serves as cofactor. Methylation at the C-terminal Leu-307 is critical for interactions with regulatory subunits and functions in DNA repair.

The protein localises to the cytoplasm. Its subcellular location is the nucleus. The protein resides in the cytoskeleton. It localises to the microtubule organizing center. It is found in the centrosome. It carries out the reaction O-phospho-L-seryl-[protein] + H2O = L-seryl-[protein] + phosphate. The enzyme catalyses O-phospho-L-threonyl-[protein] + H2O = L-threonyl-[protein] + phosphate. Functionally, protein phosphatase that is involved in many processes such as microtubule organization at centrosomes, maturation of spliceosomal snRNPs, apoptosis, DNA repair, tumor necrosis factor (TNF)-alpha signaling, activation of c-Jun N-terminal kinase MAPK8, regulation of histone acetylation, DNA damage checkpoint signaling, NF-kappa-B activation and cell migration. The PPP4C-PPP4R1 PP4 complex may play a role in dephosphorylation and regulation of HDAC3. The PPP4C-PPP4R2-PPP4R3A PP4 complex specifically dephosphorylates H2AX phosphorylated on Ser-140 (gamma-H2AX) generated during DNA replication and required for DNA DSB repair. Dephosphorylates NDEL1 at CDK1 phosphorylation sites and negatively regulates CDK1 activity in interphase. In response to DNA damage, catalyzes RPA2 dephosphorylation, an essential step for DNA repair since it allows the efficient RPA2-mediated recruitment of RAD51 to chromatin. This chain is Serine/threonine-protein phosphatase 4 catalytic subunit (PPP4C), found in Oryctolagus cuniculus (Rabbit).